Reading from the N-terminus, the 393-residue chain is NAD(P)H-quinone oxidoreductase subunit H, chloroplastic (393 aa).

The protein belongs to the complex I 49 kDa subunit family. In terms of assembly, NDH is composed of at least 16 different subunits, 5 of which are encoded in the nucleus.

The protein localises to the plastid. Its subcellular location is the chloroplast thylakoid membrane. It carries out the reaction a plastoquinone + NADH + (n+1) H(+)(in) = a plastoquinol + NAD(+) + n H(+)(out). The catalysed reaction is a plastoquinone + NADPH + (n+1) H(+)(in) = a plastoquinol + NADP(+) + n H(+)(out). Its function is as follows. NDH shuttles electrons from NAD(P)H:plastoquinone, via FMN and iron-sulfur (Fe-S) centers, to quinones in the photosynthetic chain and possibly in a chloroplast respiratory chain. The immediate electron acceptor for the enzyme in this species is believed to be plastoquinone. Couples the redox reaction to proton translocation, and thus conserves the redox energy in a proton gradient. This chain is NAD(P)H-quinone oxidoreductase subunit H, chloroplastic, found in Gossypium barbadense (Sea Island cotton).